The sequence spans 243 residues: Epoxyqueuosine reductase QueH (243 aa).

The segment covering 1 to 16 (MHRTKLEQKQPHFDAQ) has biased composition (basic and acidic residues). The segment at 1–30 (MHRTKLEQKQPHFDAQKRRKKECKNSNTPF) is disordered. [4Fe-4S] cluster-binding residues include Cys-49, Cys-50, Cys-128, and Cys-131. An intrachain disulfide couples Cys-211 to Cys-213.

This sequence belongs to the QueH family.

The catalysed reaction is epoxyqueuosine(34) in tRNA + AH2 = queuosine(34) in tRNA + A + H2O. Its pathway is tRNA modification; tRNA-queuosine biosynthesis. Its function is as follows. Catalyzes the conversion of epoxyqueuosine (oQ) to queuosine (Q), which is a hypermodified base found in the wobble positions of tRNA(Asp), tRNA(Asn), tRNA(His) and tRNA(Tyr). The protein is Epoxyqueuosine reductase QueH of Histophilus somni (strain 129Pt) (Haemophilus somnus).